A 532-amino-acid polypeptide reads, in one-letter code: Zinc finger protein ZIC 2 (532 aa).

A necessary for interaction with MDFIC and transcriptional activation or repression region spans residues 100–255 (PHAAHVGSYS…YMRQQCIKQE (156 aa)). Serine 191 and serine 199 each carry phosphoserine. Lysine 253 participates in a covalent cross-link: Glycyl lysine isopeptide (Lys-Gly) (interchain with G-Cter in SUMO2). Residues 256 to 291 (LICKWIDPEQLSNPKKSCNKTFSTMHELVTHVSVEH) form a C2H2-type 1; atypical zinc finger. The segment at 300-327 (HVCFWEECPREGKPFKAKYKLVNHIRVH) adopts a C2H2-type 2; atypical zinc-finger fold. 3 C2H2-type zinc fingers span residues 333–357 (FPCPFPGCGKVFARSENLKIHKRTH), 363–387 (FQCEFEGCDRRFANSSDRKKHMHVH), and 393–415 (YLCKMCDKSYTHPSSLRKHMKVH). Disordered stretches follow at residues 406 to 452 (SSLR…SSSN) and 475 to 532 (HRGG…EWYV). A compositionally biased stretch (low complexity) spans 417–435 (SSPQGSESSPAASSGYESS). Over residues 476 to 521 (RGGGSGSGGAGGGSGGGSGSGGGGGGAGGGGGGSSGGGSGTAGGHS) the composition is skewed to gly residues. Positions 523–532 (LSSNFNEWYV) are enriched in polar residues.

The protein belongs to the GLI C2H2-type zinc-finger protein family. Interacts with RNF180. Interacts (via the C2H2-type domains 3, 4 and 5) with MDFIC (via the C2H2-type domains 3, 4 and 5); the interaction reduces its transcriptional activity. Interacts with GLI1 and GLI2. Interacts (via C2H2-type domain 3) with DHX9. Post-translationally, phosphorylated. In terms of processing, ubiquitinated by RNF180, leading to its degradation.

The protein localises to the nucleus. It is found in the cytoplasm. Acts as a transcriptional activator or repressor. Plays important roles in the early stage of organogenesis of the CNS. Activates the transcription of the serotonin transporter SERT in uncrossed ipsilateral retinal ganglion cells (iRGCs) to refine eye-specific projections in primary visual targets. Its transcriptional activity is repressed by MDFIC. Involved in the formation of the ipsilateral retinal projection at the optic chiasm midline. Drives the expression of EPHB1 on ipsilaterally projecting growth cones. Binds to the minimal GLI-consensus sequence 5'-TGGGTGGTC-3'. Associates to the basal SERT promoter region from ventrotemporal retinal segments of retinal embryos. This chain is Zinc finger protein ZIC 2 (ZIC2), found in Homo sapiens (Human).